Consider the following 491-residue polypeptide: Acetyl-coenzyme A carboxylase carboxyl transferase subunit beta, chloroplastic (491 aa).

A disordered region spans residues 28–56; the sequence is LGPIENTSESEDPNRNDMKKNSHSWGSRD. The CoA carboxyltransferase N-terminal domain maps to 223–491; the sequence is LWVQCENCYG…FPLNKNSIEH (269 aa). Positions 227, 230, 246, and 249 each coordinate Zn(2+). A C4-type zinc finger spans residues 227 to 249; sequence CENCYGLNYKKILKSKMNLCEQC.

Belongs to the AccD/PCCB family. Acetyl-CoA carboxylase is a heterohexamer composed of biotin carboxyl carrier protein, biotin carboxylase and 2 subunits each of ACCase subunit alpha and ACCase plastid-coded subunit beta (accD). The cofactor is Zn(2+).

It is found in the plastid. The protein localises to the chloroplast stroma. It carries out the reaction N(6)-carboxybiotinyl-L-lysyl-[protein] + acetyl-CoA = N(6)-biotinyl-L-lysyl-[protein] + malonyl-CoA. The protein operates within lipid metabolism; malonyl-CoA biosynthesis; malonyl-CoA from acetyl-CoA: step 1/1. Its function is as follows. Component of the acetyl coenzyme A carboxylase (ACC) complex. Biotin carboxylase (BC) catalyzes the carboxylation of biotin on its carrier protein (BCCP) and then the CO(2) group is transferred by the transcarboxylase to acetyl-CoA to form malonyl-CoA. The polypeptide is Acetyl-coenzyme A carboxylase carboxyl transferase subunit beta, chloroplastic (Daucus carota (Wild carrot)).